We begin with the raw amino-acid sequence, 424 residues long: Neurotensin receptor type 1 (424 aa).

The interval 1–23 is disordered; that stretch reads MHLNSSVPQGTPGEPDAQPFSGP. At 1 to 68 the chain is on the extracellular side; that stretch reads MHLNSSVPQG…TDIYSKVLVT (68 aa). Residues Asn-4, Asn-38, and Asn-42 are each glycosylated (N-linked (GlcNAc...) asparagine). A helical membrane pass occupies residues 69-89; the sequence is AIYLALFVVGTVGNSVTAFTL. At 90–103 the chain is on the cytoplasmic side; sequence ARKKSLQSLQSTVH. A helical transmembrane segment spans residues 104 to 123; the sequence is YHLGSLALSDLLILLLAMPV. The Extracellular portion of the chain corresponds to 124–143; it reads ELYNFIWVHHPWAFGDAGCR. Cysteines 142 and 225 form a disulfide. A helical membrane pass occupies residues 144-165; sequence GYYFLRDACTYATALNVASLSV. At 166 to 185 the chain is on the cytoplasmic side; that stretch reads ERYLAICHPFKAKTLMSRSR. The chain crosses the membrane as a helical span at residues 186–206; the sequence is TKKFISAIWLASALLAIPMLF. The Extracellular portion of the chain corresponds to 207–235; sequence TMGLQNRSGDGTHPGGLVCTPIVDTATVK. The helical transmembrane segment at 236–260 threads the bilayer; that stretch reads VVIQVNTFMSFLFPMLVISILNTVI. Residues 261 to 308 lie on the Cytoplasmic side of the membrane; it reads ANKLTVMVHQAAEQGRVCTVGTHNGLEHSTFNMTIEPGRVQALRHGVL. Residues 309–330 traverse the membrane as a helical segment; the sequence is VLRAVVIAFVVCWLPYHVRRLM. The interval 326 to 349 is neurotensin binding; sequence VRRLMFCYISDEQWTTFLFDFYHY. The Extracellular portion of the chain corresponds to 331–348; the sequence is FCYISDEQWTTFLFDFYH. The helical transmembrane segment at 349-369 threads the bilayer; the sequence is YFYMLTNALFYVSSAINPILY. Residues 370 to 424 lie on the Cytoplasmic side of the membrane; it reads NLVSANFRQVFLSTLACLCPGWRHRRKKRPTFSRKPNSMSSNHAFSTSATRETLY. 2 S-palmitoyl cysteine lipidation sites follow: Cys-386 and Cys-388. The tract at residues 397–424 is disordered; the sequence is KRPTFSRKPNSMSSNHAFSTSATRETLY. A compositionally biased stretch (polar residues) spans 403-424; the sequence is RKPNSMSSNHAFSTSATRETLY.

The protein belongs to the G-protein coupled receptor 1 family. Neurotensin receptor subfamily. NTSR1 sub-subfamily. As to quaternary structure, interacts (palmitoylated form) with GNA11. Post-translationally, N-glycosylated. In terms of processing, palmitoylated; this is required for normal localization at membrane rafts and normal GNA11-mediated activation of down-stream signaling cascades. The palmitoylation level increases in response to neurotensin treatment. As to expression, detected in brain and small intestine.

Its subcellular location is the cell membrane. The protein localises to the membrane raft. Functionally, G-protein coupled receptor for the tridecapeptide neurotensin (NTS). Signaling is effected via G proteins that activate a phosphatidylinositol-calcium second messenger system. Signaling leads to the activation of downstream MAP kinases and protects cells against apoptosis. In Rattus norvegicus (Rat), this protein is Neurotensin receptor type 1 (Ntsr1).